A 149-amino-acid polypeptide reads, in one-letter code: NPC intracellular cholesterol transporter 2 (149 aa).

Positions 1-19 (MHFLAAAFLLLTLSASALA) are cleaved as a signal peptide. Cystine bridges form between Cys27-Cys140, Cys42-Cys47, and Cys93-Cys99. An N-linked (GlcNAc...) asparagine glycan is attached at Asn58. The residue at position 116 (Lys116) is an N6-acetyllysine.

The protein belongs to the NPC2 family. In terms of assembly, interacts with NPC1 (via the second lumenal domain) in a cholestrol-dependent manner. Interacts with NUS1/NgBR, the interaction stabilizes NCP2 and regulates cholesterol trafficking. Interacts with DHDDS. Interacts with NEDD4L (via C2 domain). Interacts with NPC1L1. N-glycosylated. Found in the epididymal fluid as a 19 kDa glycoprotein that is processed during its passage through the epididymis into a 16 kDa protein. In terms of tissue distribution, found in the fluid from the distal caput to cauda epididymis, not detected in the rete testis and the proximal and middle caput epididymal fluids (at protein level).

It localises to the secreted. Its subcellular location is the endoplasmic reticulum. The protein resides in the lysosome. The catalysed reaction is cholesterol(in) = cholesterol(out). Functionally, intracellular cholesterol transporter which acts in concert with NPC1 and plays an important role in the egress of cholesterol from the lysosomal compartment. Unesterified cholesterol that has been released from LDLs in the lumen of the late endosomes/lysosomes is transferred by NPC2 to the cholesterol-binding pocket in the N-terminal domain of NPC1. May bind and mobilize cholesterol that is associated with membranes. NPC2 binds cholesterol with a 1:1 stoichiometry. Can bind a variety of sterols, including lathosterol, desmosterol and the plant sterols stigmasterol and beta-sitosterol. The secreted form of NCP2 regulates biliary cholesterol secretion via stimulation of ABCG5/ABCG8-mediated cholesterol transport. The protein is NPC intracellular cholesterol transporter 2 of Sus scrofa (Pig).